Reading from the N-terminus, the 981-residue chain is Rab3 GTPase-activating protein catalytic subunit (981 aa).

Phosphoserine is present on residues S83, S379, S537, S579, S581, and S590. A disordered region spans residues 592–613; it reads TEELKGNGQESGKKGGPKEMAN. S664 bears the Phosphoserine mark. T908 carries the phosphothreonine modification. The disordered stretch occupies residues 908–937; the sequence is TPPEEELKRMGSPEERRQNSVSDFPPPAGR. Residues 912-925 show a composition bias toward basic and acidic residues; it reads EELKRMGSPEERRQ.

It belongs to the Rab3-GAP catalytic subunit family. The Rab3 GTPase-activating complex is a heterodimer composed of RAB3GAP1 and RAB3GAP2. The Rab3 GTPase-activating complex interacts with DMXL2. Interacts with LMAN1. As to expression, ubiquitous.

It is found in the cytoplasm. Its subcellular location is the endoplasmic reticulum. It localises to the golgi apparatus. The protein localises to the cis-Golgi network. In terms of biological role, catalytic subunit of the Rab3 GTPase-activating (Rab3GAP) complex composed of RAB3GAP1 and RAB3GAP2, which has GTPase-activating protein (GAP) activity towards various Rab3 subfamily members (RAB3A, RAB3B, RAB3C and RAB3D), RAB5A and RAB43, and guanine nucleotide exchange factor (GEF) activity towards RAB18. As part of the Rab3GAP complex, acts as a GAP for Rab3 proteins by converting active RAB3-GTP to the inactive form RAB3-GDP. Rab3 proteins are involved in regulated exocytosis of neurotransmitters and hormones. The Rab3GAP complex, acts as a GEF for RAB18 by promoting the conversion of inactive RAB18-GDP to the active form RAB18-GTP. Recruits and stabilizes RAB18 at the cis-Golgi membrane in fibroblasts where RAB18 is most likely activated. Also involved in RAB18 recruitment at the endoplasmic reticulum (ER) membrane where it maintains proper ER structure. Required for normal eye and brain development. May participate in neurodevelopmental processes such as proliferation, migration and differentiation before synapse formation, and non-synaptic vesicular release of neurotransmitters. The polypeptide is Rab3 GTPase-activating protein catalytic subunit (Homo sapiens (Human)).